Reading from the N-terminus, the 1118-residue chain is Sodium-driven chloride bicarbonate exchanger (1118 aa).

Disordered stretches follow at residues 1–23 (MEIKDQGAQMEPLLPTRNDEEAV) and 58–97 (GRKSHRRHRHRGHKHRKRDRERDSGLEDGRESPSFDTPSQ). Residues 1–509 (MEIKDQGAQM…DFRDAFSLQC (509 aa)) are Cytoplasmic-facing. The segment covering 59 to 76 (RKSHRRHRHRGHKHRKRD) has biased composition (basic residues). A compositionally biased stretch (basic and acidic residues) spans 77-90 (RERDSGLEDGRESP). Ser-89 carries the post-translational modification Phosphoserine. At Thr-94 the chain carries Phosphothreonine. Zn(2+) is bound by residues His-221 and His-223. Disordered stretches follow at residues 269-310 (AENK…KGPP) and 457-476 (NGTAAHGEAEPHGGHSGPEL). Ser-276 carries the phosphoserine modification. A helical membrane pass occupies residues 510 to 530 (LASFLFLYCACMSPVITFGGL). Over 531–538 (LGEATEGR) the chain is Extracellular. Residues 539 to 559 (ISAIESLFGASMTGIAYSLFG) form a helical membrane-spanning segment. At 560–562 (GQP) the chain is on the cytoplasmic side. Residues 563 to 583 (LTILGSTGPVLVFEKILFKFC) traverse the membrane as a helical segment. Topologically, residues 584-596 (KEYGLSYLSLRAS) are extracellular. Residues 597–617 (IGLWTATLCIILVATDASSLV) form a helical membrane-spanning segment. The Cytoplasmic segment spans residues 618 to 626 (CYITRFTEE). Residues 627–647 (AFASLICIIFIYEALEKLFEL) form a helical membrane-spanning segment. Residues 648–720 (SETYPINMHN…VGRACGHGHP (73 aa)) are Extracellular-facing. Residues Asn-677, Asn-687, and Asn-697 are each glycosylated (N-linked (GlcNAc...) asparagine). A helical membrane pass occupies residues 721–741 (YVPDVLFWSVILFFSTVTMSA). The Cytoplasmic segment spans residues 742 to 762 (TLKQFKTSRYFPTKVRSIVSD). Residues 763–783 (FAVFLTILCMVLIDYAIGIPS) traverse the membrane as a helical segment. Topologically, residues 784–809 (PKLQVPSVFKPTRDDRGWFVTPLGPN) are extracellular. Residues 810–830 (PWWTIIAAIIPALLCTILIFM) traverse the membrane as a helical segment. Residues 831–855 (DQQITAVIINRKEHKLKKGCGYHLD) are Cytoplasmic-facing. The helical transmembrane segment at 856 to 876 (LLMVAVMLGVCSIMGLPWFVA) threads the bilayer. Residues 877–912 (ATVLSITHVNSLKLESECSAPGEQPKFLGIREQRVT) are Extracellular-facing. Residues 913 to 933 (GLMIFILMGSSVFMTSILKFI) form a helical membrane-spanning segment. Over 934 to 935 (PM) the chain is Cytoplasmic. Residues 936-956 (PVLYGVFLYMGASSLKGIQLF) form a helical membrane-spanning segment. Topologically, residues 957-998 (DRIKLFWMPAKHQPDFIYLRHVPLRKVHLFTVIQMSCLGLLW) are extracellular. A helical transmembrane segment spans residues 999–1019 (IIKVSRAAIVFPMMVLALVFV). The Cytoplasmic portion of the chain corresponds to 1020 to 1118 (RKLMDFLFTK…SRFPSKSSPS (99 aa)). 2 positions are modified to phosphoserine: Ser-1057 and Ser-1085.

Belongs to the anion exchanger (TC 2.A.31) family. In terms of processing, N-glycosylated. As to expression, in the brain, detected in cerebral cortex, subcortex, cerebellum, hippocampus and medulla (at protein level). In the cerebrum, expressed at high levels throughout the cortex, at lower levels in striatum and not detectable in the corpus callosum (at protein level). In the cerebellum, detected at high levels in the molecular layer but at very low levels in the granular layer (at protein level). In the central nervous system, detected in neurons in the olfactory bulb, cortex and cerebellum (at protein level). Within the hippocampus, abundantly expressed in CA3 pyramidal cells (at protein level). Strongly expressed in the retina with high levels in bipolar and amacrine cells (at protein level). Expressed in the epithelial cells of the choroid plexus. During embryonic development, expressed in neurons of the central nervous system. Also expressed in the peripheral nervous system and in non-neuronal tissues such as the dura and some epithelia including the acid-secreting epithelium of the stomach and the duodenal epithelium. In the embryonic retina, expression is restricted to the neuronal cell layer and the retinal pigment epithelium. Expressed at high levels in brain and at low levels in the pituitary, testis, kidney and ileum. Also expressed in pancreatic islets.

It localises to the basolateral cell membrane. The protein resides in the apical cell membrane. It is found in the cell projection. The protein localises to the dendrite. Its subcellular location is the axon. It localises to the perikaryon. The protein resides in the presynapse. It is found in the postsynapse. It carries out the reaction 2 hydrogencarbonate(out) + chloride(in) + Na(+)(out) = 2 hydrogencarbonate(in) + chloride(out) + Na(+)(in). Its activity is regulated as follows. Zinc-binding negatively regulates its activity. In terms of biological role, sodium/bicarbonate cotransporter which plays an important role in regulating intracellular pH. Has been shown to act as a sodium/bicarbonate cotransporter in exchange for intracellular chloride. Has also been shown to act as a sodium/biocarbonate cotransporter which is not responsible for net efflux of chloride, with the observed chloride efflux being due to chloride self-exchange. Controls neuronal pH and may contribute to the secretion of cerebrospinal fluid. Acting on presynaptic intracellular pH, it promotes GABA release, reduces the excitability of CA1 pyramidal neurons, and modulates short-term synaptic plasticity. Required in retinal cells to maintain normal pH which is necessary for normal vision. In the kidney, likely to mediate bicarbonate reclamation in the apical membrane of the proximal tubules. Sodium/bicarbonate cotransporter which mediates cotransport of sodium and bicarbonate in association with an efflux of intracellular chloride. This chain is Sodium-driven chloride bicarbonate exchanger, found in Mus musculus (Mouse).